The primary structure comprises 97 residues: Nucleoid-associated protein HP_0035 (97 aa).

Belongs to the YbaB/EbfC family. Homodimer.

The protein localises to the cytoplasm. It localises to the nucleoid. Functionally, binds to DNA and alters its conformation. May be involved in regulation of gene expression, nucleoid organization and DNA protection. The sequence is that of Nucleoid-associated protein HP_0035 from Helicobacter pylori (strain ATCC 700392 / 26695) (Campylobacter pylori).